We begin with the raw amino-acid sequence, 55 residues long: Ferredoxin (55 aa).

2 4Fe-4S ferredoxin-type domains span residues 2–26 (YKITDECIACGSCADQCPVEAISEG) and 27–55 (SIYEIDEALCTDCGACADQCPVEAIVPED). [4Fe-4S] cluster contacts are provided by Cys-8, Cys-11, Cys-14, Cys-18, Cys-36, Cys-39, Cys-42, and Cys-46.

[4Fe-4S] cluster serves as cofactor.

Functionally, ferredoxins are iron-sulfur proteins that transfer electrons in a wide variety of metabolic reactions. The chain is Ferredoxin from Butyribacterium methylotrophicum.